A 258-amino-acid polypeptide reads, in one-letter code: Imidazole glycerol phosphate synthase subunit HisF (258 aa).

Catalysis depends on residues Asp-11 and Asp-130.

It belongs to the HisA/HisF family. In terms of assembly, heterodimer of HisH and HisF.

Its subcellular location is the cytoplasm. It catalyses the reaction 5-[(5-phospho-1-deoxy-D-ribulos-1-ylimino)methylamino]-1-(5-phospho-beta-D-ribosyl)imidazole-4-carboxamide + L-glutamine = D-erythro-1-(imidazol-4-yl)glycerol 3-phosphate + 5-amino-1-(5-phospho-beta-D-ribosyl)imidazole-4-carboxamide + L-glutamate + H(+). Its pathway is amino-acid biosynthesis; L-histidine biosynthesis; L-histidine from 5-phospho-alpha-D-ribose 1-diphosphate: step 5/9. Its function is as follows. IGPS catalyzes the conversion of PRFAR and glutamine to IGP, AICAR and glutamate. The HisF subunit catalyzes the cyclization activity that produces IGP and AICAR from PRFAR using the ammonia provided by the HisH subunit. In Escherichia fergusonii (strain ATCC 35469 / DSM 13698 / CCUG 18766 / IAM 14443 / JCM 21226 / LMG 7866 / NBRC 102419 / NCTC 12128 / CDC 0568-73), this protein is Imidazole glycerol phosphate synthase subunit HisF.